The following is a 290-amino-acid chain: Bifunctional protein FolD (290 aa).

NADP(+) contacts are provided by residues 167 to 169, S192, and I233; that span reads GRS.

This sequence belongs to the tetrahydrofolate dehydrogenase/cyclohydrolase family. Homodimer.

It carries out the reaction (6R)-5,10-methylene-5,6,7,8-tetrahydrofolate + NADP(+) = (6R)-5,10-methenyltetrahydrofolate + NADPH. The catalysed reaction is (6R)-5,10-methenyltetrahydrofolate + H2O = (6R)-10-formyltetrahydrofolate + H(+). It participates in one-carbon metabolism; tetrahydrofolate interconversion. Functionally, catalyzes the oxidation of 5,10-methylenetetrahydrofolate to 5,10-methenyltetrahydrofolate and then the hydrolysis of 5,10-methenyltetrahydrofolate to 10-formyltetrahydrofolate. This is Bifunctional protein FolD from Gloeobacter violaceus (strain ATCC 29082 / PCC 7421).